The sequence spans 293 residues: Protease HtpX (293 aa).

2 helical membrane-spanning segments follow: residues 4 to 24 (IALF…VLSL) and 34 to 54 (GLLI…LLMS). Zn(2+) is bound at residue His139. Glu140 is an active-site residue. His143 is a Zn(2+) binding site. Helical transmembrane passes span 158 to 178 (VVNT…AGFL) and 193 to 213 (LIYF…ASII). Glu222 is a binding site for Zn(2+).

It belongs to the peptidase M48B family. Requires Zn(2+) as cofactor.

The protein resides in the cell inner membrane. This chain is Protease HtpX, found in Salmonella agona (strain SL483).